The following is a 759-amino-acid chain: Cullin-4A (759 aa).

Positions 1-40 (MADEGPRKGSVSALMGRTNGLTKPAALAGGPAKPGGTGGS) are disordered. Residue lysine 8 forms a Glycyl lysine isopeptide (Lys-Gly) (interchain with G-Cter in SUMO2) linkage. Phosphoserine is present on serine 10. A compositionally biased stretch (low complexity) spans 20–31 (GLTKPAALAGGP). Lysine 33 participates in a covalent cross-link: Glycyl lysine isopeptide (Lys-Gly) (interchain with G-Cter in ubiquitin). A Cullin neddylation domain is found at 691–750 (DRQYQIDAAIVRIMKMRKTLGHNLLVSELYNQLKFPVKPGDLKKRIESLIDRDYMERDKD). Lysine 705 is covalently cross-linked (Glycyl lysine isopeptide (Lys-Gly) (interchain with G-Cter in NEDD8)).

This sequence belongs to the cullin family. As to quaternary structure, can self-associate. Component of multiple DCX (DDB1-CUL4-X-box) E3 ubiquitin-protein ligase complexes that seem to consist of DDB1, CUL4A or CUL4B, RBX1 and a variable substrate recognition component which seems to belong to a protein family described as DCAF (Ddb1- and Cul4-associated factor) or CDW (CUL4-DDB1-associated WD40-repeat) proteins. Component of the CSA complex (DCX(ERCC8) complex) containing ERCC8, RBX1, DDB1 and CUL4A; the CSA complex interacts with RNA polymerase II; upon UV irradiation it interacts with the COP9 signalosome and preferentially with the hyperphosphorylated form of RNA polymerase II. Component of the DCX(DET1-COP1) complex with the substrate recognition component DET1 and COP1. Component of the DCX(DDB2) complex with the substrate recognition component DDB2. Component of the DCX(DTL) complex with the putative substrate recognition component DTL. Component of DCX complexes part of the DesCEND (destruction via C-end degrons) pathway, which contain either TRPC4AP or DCAF12 as substrate-recognition component. Component of the DCX(AMBRA1) complex with the substrate recognition component AMBRA1. Interacts with DDB1, RBX1, RNF7, CDT1, TIP120A/CAND1, SKP2, CDKN1B, MDM2, TP53 and HOXA9. Interacts with DDB2; the interactions with DDB2 and CAND1 are mutually exclusive. Interacts with DCAF1, DTL, DDA1, DCAF6, DCAF4, DCAF16, DCAF17, DET1, WDTC1, DCAF5, DCAF11, WDR24A, COP1, PAFAH1B1, ERCC8, GRWD1, FBXW5, RBBP7, GNB2, WSB1, WSB2, NUP43, PWP1, FBXW8, ATG16L1, KATNB1, RBBP4, RBBP5, LRWD1 and DCAF8. May interact with WDR26, WDR51B, SNRNP40, WDR61, WDR76, WDR5. Interacts (when neddylated) with ARIH1; leading to activate the E3 ligase activity of ARIH1. The DDB1-CUL4A complex interacts with CRY1. Interacts (unneddylated form) with DCUN1D1, DCUN1D2, DCUN1D3, DCUN1D4 and DCUN1D5; these interactions promote the cullin neddylation. In terms of assembly, (Microbial infection) Interacts with murine cytomegalovirus M48. Neddylated; required for activity of cullin-RING-based E3 ubiquitin-protein ligase complexes. Deneddylated via its interaction with the COP9 signalosome (CSN) complex. Post-translationally, (Microbial infection) Deneddylated by murine cytomegalovirus M48 leading to a S-phase-like environment that is required for efficient replication of the viral genome. Expressed in oocytes (at protein level). In the ovary, also expressed in cumulus cells. Expressed in testis, spleen and kidney.

It participates in protein modification; protein ubiquitination. In terms of biological role, core component of multiple cullin-RING-based E3 ubiquitin-protein ligase complexes which mediate the ubiquitination of target proteins. As a scaffold protein may contribute to catalysis through positioning of the substrate and the ubiquitin-conjugating enzyme. The E3 ubiquitin-protein ligase activity of the complex is dependent on the neddylation of the cullin subunit and is inhibited by the association of the deneddylated cullin subunit with TIP120A/CAND1. The functional specificity of the E3 ubiquitin-protein ligase complex depends on the variable substrate recognition component. DCX(DET1-COP1) directs ubiquitination of JUN. DCX(DDB2) directs ubiquitination of XPC. DCX(DDB2) ubiquitinates histones H3-H4 and is required for efficient histone deposition during replication-coupled (H3.1) and replication-independent (H3.3) nucleosome assembly, probably by facilitating the transfer of H3 from ASF1A/ASF1B to other chaperones involved in histone deposition. DCX(DTL) plays a role in PCNA-dependent polyubiquitination of CDT1 and MDM2-dependent ubiquitination of p53/TP53 in response to radiation-induced DNA damage and during DNA replication. DCX(DTL) directs autoubiquitination of DTL. In association with DDB1 and SKP2 probably is involved in ubiquitination of CDKN1B/p27kip. Is involved in ubiquitination of HOXA9. The DDB1-CUL4A-DTL E3 ligase complex regulates the circadian clock function by mediating the ubiquitination and degradation of CRY1. The DCX(ERCC8) complex (also named CSA complex) plays a role in transcription-coupled repair (TCR). A number of DCX complexes (containing either TRPC4AP or DCAF12 as substrate-recognition component) are part of the DesCEND (destruction via C-end degrons) pathway, which recognizes a C-degron located at the extreme C terminus of target proteins, leading to their ubiquitination and degradation. With CUL4B, contributes to ribosome biogenesis. The DCX(AMBRA1) complex is a master regulator of the transition from G1 to S cell phase by mediating ubiquitination of phosphorylated cyclin-D (CCND1, CCND2 and CCND3). The DCX(AMBRA1) complex also acts as a regulator of Cul5-RING (CRL5) E3 ubiquitin-protein ligase complexes by mediating ubiquitination and degradation of Elongin-C (ELOC) component of CRL5 complexes. The chain is Cullin-4A from Mus musculus (Mouse).